The sequence spans 610 residues: UvrABC system protein C (610 aa).

A GIY-YIG domain is found at T12–I91. Residues S202–L237 enclose the UVR domain.

Belongs to the UvrC family. As to quaternary structure, interacts with UvrB in an incision complex.

The protein localises to the cytoplasm. In terms of biological role, the UvrABC repair system catalyzes the recognition and processing of DNA lesions. UvrC both incises the 5' and 3' sides of the lesion. The N-terminal half is responsible for the 3' incision and the C-terminal half is responsible for the 5' incision. The sequence is that of UvrABC system protein C from Koribacter versatilis (strain Ellin345).